Here is a 281-residue protein sequence, read N- to C-terminus: Peptidyl-prolyl cis-trans isomerase CYP28, chloroplastic (281 aa).

The N-terminal 24 residues, 1 to 24, are a transit peptide targeting the chloroplast; the sequence is MASSSILIPPILTRRNLLLSTTIA. Residues 66-268 form the PPIase cyclophilin-type domain; the sequence is STTPCSDSTP…KTVFISGCGE (203 aa).

The protein belongs to the cyclophilin-type PPIase family. In terms of processing, S-nytrosylated during the hypersensitive disease resistance response. As to expression, ubiquitous. Not detected in roots.

It is found in the plastid. It localises to the chloroplast. It catalyses the reaction [protein]-peptidylproline (omega=180) = [protein]-peptidylproline (omega=0). Functionally, PPIases accelerate the folding of proteins. It catalyzes the cis-trans isomerization of proline imidic peptide bonds in oligopeptides. This chain is Peptidyl-prolyl cis-trans isomerase CYP28, chloroplastic (CYP28), found in Arabidopsis thaliana (Mouse-ear cress).